The sequence spans 518 residues: Coiled-coil domain-containing protein 82 (518 aa).

Residues 1–14 (MVHVRRHETRKNSK) are compositionally biased toward basic residues. Residues 1-266 (MVHVRRHETR…EDDYRYDEDG (266 aa)) form a disordered region. Basic and acidic residues predominate over residues 16–27 (QKPEQKSRVDWH). Residues 38–67 (DSDEELDSNEELDSDEEHDSGESIDSDEEL) show a composition bias toward acidic residues. Residues 68–89 (DISKKSDINELPEKETELKLIK) are compositionally biased toward basic and acidic residues. Residues 92 to 107 (SQGSNSKHLTNTSNSS) show a composition bias toward polar residues. Residues 111–127 (EQLKETKHNDLPDDEAH) show a composition bias toward basic and acidic residues. Phosphoserine occurs at positions 170 and 194. A compositionally biased stretch (acidic residues) spans 191 to 201 (DECSSLEMEQE). A Phosphothreonine modification is found at Thr202. Positions 204 to 232 (EKSSAARKREYHQKLQELSERSRQRRRRN) form a coiled coil. A compositionally biased stretch (basic and acidic residues) spans 215–225 (HQKLQELSERS). The span at 249–266 (GEEDEDEDEDDYRYDEDG) shows a compositional bias: acidic residues. Ser305 carries the phosphoserine modification.

The polypeptide is Coiled-coil domain-containing protein 82 (Ccdc82) (Mus musculus (Mouse)).